The sequence spans 448 residues: Probable glycine dehydrogenase (decarboxylating) subunit 1 (448 aa).

It belongs to the GcvP family. N-terminal subunit subfamily. As to quaternary structure, the glycine cleavage system is composed of four proteins: P, T, L and H. In this organism, the P 'protein' is a heterodimer of two subunits.

It catalyses the reaction N(6)-[(R)-lipoyl]-L-lysyl-[glycine-cleavage complex H protein] + glycine + H(+) = N(6)-[(R)-S(8)-aminomethyldihydrolipoyl]-L-lysyl-[glycine-cleavage complex H protein] + CO2. In terms of biological role, the glycine cleavage system catalyzes the degradation of glycine. The P protein binds the alpha-amino group of glycine through its pyridoxal phosphate cofactor; CO(2) is released and the remaining methylamine moiety is then transferred to the lipoamide cofactor of the H protein. In Shouchella clausii (strain KSM-K16) (Alkalihalobacillus clausii), this protein is Probable glycine dehydrogenase (decarboxylating) subunit 1.